Here is a 170-residue protein sequence, read N- to C-terminus: MKDAYLYVVEKSVAWEFDSPEYGRLARKIVELLYERKEDLTDDRIAILLNISTAETRRILQYLMKLNLIGVRKKTTEDYRIEYAWYVDDEIIRQAISSRARVVREKLSMLIRSLTEGAYYICPSCFIRYSLDEAVNWGGTCPICGTQLEYVENVEEINKLTKIFEKLEKL.

An HTH TFE/IIEalpha-type domain is found at 1-93; that stretch reads MKDAYLYVVE…AWYVDDEIIR (93 aa).

Belongs to the TFE family. In terms of assembly, monomer. Interaction with RNA polymerase subunits RpoF and RpoE is necessary for Tfe stimulatory transcription activity. Able to interact with Tbp and RNA polymerase in the absence of DNA promoter. Interacts both with the preinitiation and elongation complexes.

Functionally, transcription factor that plays a role in the activation of archaeal genes transcribed by RNA polymerase. Facilitates transcription initiation by enhancing TATA-box recognition by TATA-box-binding protein (Tbp), and transcription factor B (Tfb) and RNA polymerase recruitment. Not absolutely required for transcription in vitro, but particularly important in cases where Tbp or Tfb function is not optimal. It dynamically alters the nucleic acid-binding properties of RNA polymerases by stabilizing the initiation complex and destabilizing elongation complexes. Seems to translocate with the RNA polymerase following initiation and acts by binding to the non template strand of the transcription bubble in elongation complexes. This Pyrobaculum arsenaticum (strain DSM 13514 / JCM 11321 / PZ6) protein is Transcription factor E.